Here is a 238-residue protein sequence, read N- to C-terminus: 3-dehydroquinate dehydratase (238 aa).

3-dehydroquinate contacts are provided by residues 35–37 (ELR) and arginine 70. The active-site Proton donor/acceptor is the histidine 133. The Schiff-base intermediate with substrate role is filled by lysine 160. Arginine 202 and glutamine 225 together coordinate 3-dehydroquinate.

It belongs to the type-I 3-dehydroquinase family. Homodimer.

It catalyses the reaction 3-dehydroquinate = 3-dehydroshikimate + H2O. It functions in the pathway metabolic intermediate biosynthesis; chorismate biosynthesis; chorismate from D-erythrose 4-phosphate and phosphoenolpyruvate: step 3/7. Involved in the third step of the chorismate pathway, which leads to the biosynthesis of aromatic amino acids. Catalyzes the cis-dehydration of 3-dehydroquinate (DHQ) and introduces the first double bond of the aromatic ring to yield 3-dehydroshikimate. This Staphylococcus aureus (strain MSSA476) protein is 3-dehydroquinate dehydratase.